The chain runs to 115 residues: Protein translation factor SUI1 homolog (115 aa).

It belongs to the SUI1 family. Expressed in all tissues examined.

Probably involved in translation. The polypeptide is Protein translation factor SUI1 homolog (GOS2) (Oryza sativa subsp. indica (Rice)).